An 85-amino-acid polypeptide reads, in one-letter code: Large ribosomal subunit protein bL27 (85 aa).

This sequence belongs to the bacterial ribosomal protein bL27 family.

This chain is Large ribosomal subunit protein bL27, found in Vesicomyosocius okutanii subsp. Calyptogena okutanii (strain HA).